A 484-amino-acid chain; its full sequence is MKLLIRPAPEVAIKSKPVRQQQMRQLRQNIRKLLARLDPEIRVDGSWDRVDVDVPDGRSLAGPVIDELVRIPGISTIQEIGVFPFVDLDDVGEKAVQAYAERLKGKTFAVRARRHGDHDFRSIDLERSVGAALLQGSDAKGVDLKSPDLEVRIEVKDDSYHIAHRRHEGLGGYPLGTVETVMTLISGGYDSSVAAYLMMRRGIRSHYLFFNLGGAAHEVGVRQVAHYLWERYGSSHNVKFISVPFEGVVAEIMRSVNHRHWGVVLKRMMLKAAAEIARDYNASGLVMGDAVAQVSSQTLTNLNVVDRASDEVVLRPLIAMDKQEIIRIAKDIGTEPFARNMPEYCGVISSKPVTRARLHRVEEDEANMDPAALADAIANRTDTMVSQLLDSTQTPEEVELIQTPSVDDVIIDVRHPSEEERSPLTLTNNDVLKIPFYELNQQVAELPGNRQYLLYCDRGTMSRMHAGHLKAEGHGNIKVYAPAV.

The 105-residue stretch at 62–166 folds into the THUMP domain; the sequence is GPVIDELVRI…DDSYHIAHRR (105 aa). Residues 184-185, lysine 266, glycine 288, and glutamine 297 each bind ATP; that span reads LI. Cysteines 345 and 456 form a disulfide. Positions 404-482 constitute a Rhodanese domain; it reads PSVDDVIIDV…GHGNIKVYAP (79 aa). The active-site Cysteine persulfide intermediate is the cysteine 456.

It belongs to the ThiI family.

It is found in the cytoplasm. The catalysed reaction is [ThiI sulfur-carrier protein]-S-sulfanyl-L-cysteine + a uridine in tRNA + 2 reduced [2Fe-2S]-[ferredoxin] + ATP + H(+) = [ThiI sulfur-carrier protein]-L-cysteine + a 4-thiouridine in tRNA + 2 oxidized [2Fe-2S]-[ferredoxin] + AMP + diphosphate. It carries out the reaction [ThiS sulfur-carrier protein]-C-terminal Gly-Gly-AMP + S-sulfanyl-L-cysteinyl-[cysteine desulfurase] + AH2 = [ThiS sulfur-carrier protein]-C-terminal-Gly-aminoethanethioate + L-cysteinyl-[cysteine desulfurase] + A + AMP + 2 H(+). Its pathway is cofactor biosynthesis; thiamine diphosphate biosynthesis. Catalyzes the ATP-dependent transfer of a sulfur to tRNA to produce 4-thiouridine in position 8 of tRNAs, which functions as a near-UV photosensor. Also catalyzes the transfer of sulfur to the sulfur carrier protein ThiS, forming ThiS-thiocarboxylate. This is a step in the synthesis of thiazole, in the thiamine biosynthesis pathway. The sulfur is donated as persulfide by IscS. The chain is tRNA sulfurtransferase from Marinobacter nauticus (strain ATCC 700491 / DSM 11845 / VT8) (Marinobacter aquaeolei).